Consider the following 143-residue polypeptide: MQEIMQFVGRHPILSIAWIALLVAVLVTTFKSLTSKVKVITRGEATRLINKEDAVVVDLRQRDDFRKGHIAGSINLLPSEIKANNVGELEKHKDKPVIVVDGSGMQCQEPANALTKAGFAQVFVLKEGVAGWAGENLPLVRGK.

One can recognise a Rhodanese domain in the interval 50-143 (NKEDAVVVDL…GENLPLVRGK (94 aa)). Lys-91 carries the post-translational modification N6-acetyllysine.

This is an uncharacterized protein from Escherichia coli O6:H1 (strain CFT073 / ATCC 700928 / UPEC).